We begin with the raw amino-acid sequence, 217 residues long: Membrane-spanning 4-domains subfamily A member 6C (217 aa).

The span at 1–20 (MIPQVVTNETITTISPNGIN) shows a compositional bias: polar residues. Residues 1 to 33 (MIPQVVTNETITTISPNGINFPQKDESQPTQQR) are disordered. Topologically, residues 1–46 (MIPQVVTNETITTISPNGINFPQKDESQPTQQRQDSLKKHLKAEIK) are cytoplasmic. The helical transmembrane segment at 47–67 (VIVAIQIMCAVTVLALGIILA) threads the bilayer. At 68–84 (SVPPVPYFNSVFSVLLK) the chain is on the extracellular side. Residues 85–105 (SGYPFIGALFFIASGILSIIT) traverse the membrane as a helical segment. Residues 106-121 (ERKSTKPLVDASLTLN) are Cytoplasmic-facing. Residues 122-142 (ILSVSFAFVGIIIISVSLAGL) traverse the membrane as a helical segment. Topologically, residues 143 to 186 (HPASEQCKQSKELSLIEHDYYQPFYNSDRSECAVTKSILTGALS) are extracellular. Residues 187-207 (VMLIISVLELGLALLSAMLWL) traverse the membrane as a helical segment. Topologically, residues 208–217 (REGVLTSLRM) are cytoplasmic.

Belongs to the MS4A family. In terms of tissue distribution, expressed only by thymus, spleen, peripheral lymph node and bone marrow.

It localises to the membrane. Functionally, may be involved in signal transduction as a component of a multimeric receptor complex. In Mus musculus (Mouse), this protein is Membrane-spanning 4-domains subfamily A member 6C (Ms4a6c).